The sequence spans 178 residues: uncharacterized protein (178 aa).

Belongs to the mimivirus L39/R874 family.

This is an uncharacterized protein from Acanthamoeba polyphaga (Amoeba).